A 475-amino-acid polypeptide reads, in one-letter code: Glutamate--tRNA ligase 2 (475 aa).

Residues 9-19 carry the 'HIGH' region motif; sequence PSPTGFLHIGS. The 'KMSKS' region motif lies at 238–242; the sequence is KLSKR. Lysine 241 contributes to the ATP binding site.

Belongs to the class-I aminoacyl-tRNA synthetase family. Glutamate--tRNA ligase type 1 subfamily. As to quaternary structure, monomer.

The protein localises to the cytoplasm. It catalyses the reaction tRNA(Glu) + L-glutamate + ATP = L-glutamyl-tRNA(Glu) + AMP + diphosphate. Its function is as follows. Catalyzes the attachment of glutamate to tRNA(Glu) in a two-step reaction: glutamate is first activated by ATP to form Glu-AMP and then transferred to the acceptor end of tRNA(Glu). The protein is Glutamate--tRNA ligase 2 of Bartonella quintana (strain Toulouse) (Rochalimaea quintana).